The sequence spans 389 residues: Vacuolar protein sorting-associated protein vts1 (389 aa).

The segment at 149–335 (NPQRKAKTPS…RPSQPTKASP (187 aa)) is disordered. Polar residues-rich tracts occupy residues 156–177 (TPSN…TLPT), 184–219 (TNAS…SSEP), and 227–282 (SLSS…PESK). Over residues 294–306 (TSITTTSTSIDPS) the composition is skewed to low complexity. The span at 308–334 (AFSSKSTLATTRTNAPLSRPSQPTKAS) shows a compositional bias: polar residues.

It belongs to the VTA1 family. In terms of assembly, homodimer (in cytoplasm).

It is found in the cytoplasm. It localises to the endosome membrane. In terms of biological role, has a role in the formation of the multivesicular body (MVB). Required for the sorting of lipids to form intralumenal vesicles and for fluid-phase transport to the vacuole. Required for sorting several plasma membrane proteins into the MVB. The polypeptide is Vacuolar protein sorting-associated protein vts1 (vts1) (Schizosaccharomyces pombe (strain 972 / ATCC 24843) (Fission yeast)).